A 467-amino-acid chain; its full sequence is MENKGVITQIIGPVVDVTFENELPRIYNALKIDRGNGEYLVAEVQQHLGNSVVRAVAMDATDGLQRGMEVVDTGPAITVPVGKAVLGRILNVLGEPVDEAGEVKAEEYAPIHREAPAFEDQGTEKEVFETGIKVVDLLAPYVKGGKIGLFGGAGVGKTVLIMELINNIAQGHGGLSVFAGVGERTREGRDLYDEMLESGVLDKTSLVYGQMNEPPGARLRVGLTGLTMAENFRDKEGQDVLFFVDNIFRFTQAPSEVSALLGRMPSAVGYQPNLATDMGALQERITSTKTGSITSVQAVYVPADDLTDPAPATTFTHLDATTVLSRRIASLGIYPAVDPLDSTSTALEPQIIGHEHYNTAREVQQILQRYKELQDIIAILGMDELSDEDKVTVNRARKIERFFSQPFHVAEQFTGMDGKYVTVKETIRGFKEIIEGKHDDLPEQAFLYVGTIDEAIAKARELMKGAE.

151 to 158 (GGAGVGKT) is an ATP binding site.

The protein belongs to the ATPase alpha/beta chains family. As to quaternary structure, F-type ATPases have 2 components, CF(1) - the catalytic core - and CF(0) - the membrane proton channel. CF(1) has five subunits: alpha(3), beta(3), gamma(1), delta(1), epsilon(1). CF(0) has three main subunits: a, b and c.

The protein localises to the cell membrane. The catalysed reaction is 4 Na(+)(in) + ATP + H2O = 4 Na(+)(out) + ADP + phosphate + H(+). In terms of biological role, produces ATP from ADP in the presence of a sodium ion gradient across the membrane. The beta chain is the catalytic subunit. The protein is ATP synthase subunit beta, sodium ion specific of Propionigenium modestum.